We begin with the raw amino-acid sequence, 162 residues long: Putative pre-16S rRNA nuclease (162 aa).

The protein belongs to the YqgF nuclease family.

The protein resides in the cytoplasm. In terms of biological role, could be a nuclease involved in processing of the 5'-end of pre-16S rRNA. The polypeptide is Putative pre-16S rRNA nuclease (Brucella melitensis biotype 1 (strain ATCC 23456 / CCUG 17765 / NCTC 10094 / 16M)).